A 266-amino-acid polypeptide reads, in one-letter code: MRLIPLNTAEQVGKWAARHIVNRINAFKPTADRPFVLGLPTGGTPLTAYKALVEMHKAGEVSFKHVVTFNMDEYVGLPKEHPESYYSFMHRNFFDHVDIPAENINLLNGNAPDIDAECRQYEEKIRSYGKIHLFMGGVGNDGHIAFNEPASSLASRTRIKTLTHDTRVANSRFFDGDVNQVPKYALTVGVGTLLDAEEVMILVLGHQKAQALQAAVEGNVNHMWTISCLQLHPKAVVVCDEPATMELKVKTLKYFNELEAENIKGL.

Asp-72 (proton acceptor; for enolization step) is an active-site residue. The For ring-opening step role is filled by Asp-141. The active-site Proton acceptor; for ring-opening step is the His-143. The active-site For ring-opening step is Glu-148.

This sequence belongs to the glucosamine/galactosamine-6-phosphate isomerase family. NagB subfamily. Homohexamer.

It carries out the reaction alpha-D-glucosamine 6-phosphate + H2O = beta-D-fructose 6-phosphate + NH4(+). It participates in amino-sugar metabolism; N-acetylneuraminate degradation; D-fructose 6-phosphate from N-acetylneuraminate: step 5/5. Its activity is regulated as follows. Allosterically activated by N-acetylglucosamine 6-phosphate (GlcNAc6P). Catalyzes the reversible isomerization-deamination of glucosamine 6-phosphate (GlcN6P) to form fructose 6-phosphate (Fru6P) and ammonium ion. This chain is Glucosamine-6-phosphate deaminase, found in Salmonella arizonae (strain ATCC BAA-731 / CDC346-86 / RSK2980).